We begin with the raw amino-acid sequence, 252 residues long: Hsp70-Hsp90 organising protein (252 aa).

TPR repeat units follow at residues 7 to 40, 41 to 74, and 75 to 108; these read AQRL…DPLD, HVLY…KKDW, and PKGY…DPNN. Positions 197 to 239 form a coiled coil; that stretch reads EGNDAEERQRQQREEEERRKKKEEEERKKKEEEEMKKQNRTPE. A disordered region spans residues 199 to 252; the sequence is NDAEERQRQQREEEERRKKKEEEERKKKEEEEMKKQNRTPEQIQGDEHKLKVMN. Composition is skewed to basic and acidic residues over residues 201–233 and 243–252; these read AEER…EMKK and GDEHKLKVMN.

In terms of assembly, monomer. Homodimer. Forms a complex composed of HOP and chaperones HSP70 and HSP90; the interaction is stronger in the absence of ATP. Interacts (via TPR 1, 2, 3, 7, 8 and 9 repeats) with HSP70 (via C-terminus); the interaction is direct and is stronger in the absence of ATP. Interacts (via TPR 4, 5 and 6 repeats) with HSP90 (via C-terminus); the interaction is direct.

The protein localises to the cytoplasm. In terms of biological role, acts as a co-chaperone and mediates the association of the chaperones HSP70 and HSP90 probably facilitating substrate transfer from HSP70 to HSP90. Stimulates HSP70 ATPase activity and, in contrast, inhibits HSP90 ATPase activity. The chain is Hsp70-Hsp90 organising protein from Plasmodium falciparum.